The following is a 443-amino-acid chain: Ribosomal protein uS12 methylthiotransferase RimO (443 aa).

In terms of domain architecture, MTTase N-terminal spans 8–118 (PKVGFVSLGC…VVNAVHEVVP (111 aa)). [4Fe-4S] cluster contacts are provided by Cys17, Cys53, Cys82, Cys151, Cys155, and Cys158. Residues 137–375 (LTPRHYAYLK…MAHQQAISTA (239 aa)) enclose the Radical SAM core domain. A TRAM domain is found at 378 to 443 (QLRIGKEIEV…DEYDMWAEPI (66 aa)).

The protein belongs to the methylthiotransferase family. RimO subfamily. Requires [4Fe-4S] cluster as cofactor.

It localises to the cytoplasm. It catalyses the reaction L-aspartate(89)-[ribosomal protein uS12]-hydrogen + (sulfur carrier)-SH + AH2 + 2 S-adenosyl-L-methionine = 3-methylsulfanyl-L-aspartate(89)-[ribosomal protein uS12]-hydrogen + (sulfur carrier)-H + 5'-deoxyadenosine + L-methionine + A + S-adenosyl-L-homocysteine + 2 H(+). In terms of biological role, catalyzes the methylthiolation of an aspartic acid residue of ribosomal protein uS12. The protein is Ribosomal protein uS12 methylthiotransferase RimO of Pseudomonas putida (strain GB-1).